An 85-amino-acid chain; its full sequence is Large ribosomal subunit protein bL31B (85 aa).

This sequence belongs to the bacterial ribosomal protein bL31 family. Type B subfamily. In terms of assembly, part of the 50S ribosomal subunit.

The polypeptide is Large ribosomal subunit protein bL31B (Pseudarthrobacter chlorophenolicus (strain ATCC 700700 / DSM 12829 / CIP 107037 / JCM 12360 / KCTC 9906 / NCIMB 13794 / A6) (Arthrobacter chlorophenolicus)).